The following is an 88-amino-acid chain: M-zodatoxin-Lt1a (88 aa).

An N-terminal signal peptide occupies residues 1-22; sequence MKYFVVALALAVALVCIAESTA. Residues 23–62 constitute a propeptide that is removed on maturation; that stretch reads YDVNEELENELDDLSDAAWLAKAAEDLQALDDFEESEESR. The Processing quadruplet motif motif lies at 59–62; that stretch reads EESR.

Post-translationally, cleavage of the propeptide depends on the processing quadruplet motif (XXXR, with at least one of X being E). In terms of tissue distribution, expressed by the venom gland.

It is found in the secreted. In terms of biological role, has antimicrobial activity against Gram-positive bacteria (A.globiformis VKM Ac-1112 (MIC=0.5 uM), and B.subtilis VKM B-501 (MIC=1.0 uM)), Gram-negative bacteria (E.coli DH5-alpha (MIC=1.0 uM), E.coli MH1 (MIC=0.7 uM), and P.aeruginosa PAO1 (MIC=4.1 uM)), and yeasts (P.pastoris GS115 (MIC=17 uM), and S.cerevisiae Y190 (MIC&gt;33 uM)). Has a moderate hemolytic activity against rabbit erythrocytes. Causes paralysis, but is not lethal when injected into insect (M.domestica) larvae. This is M-zodatoxin-Lt1a from Lachesana tarabaevi (Spider).